A 278-amino-acid chain; its full sequence is Diaminopimelate epimerase (278 aa).

Positions 11 and 63 each coordinate substrate. Cys72 (proton donor) is an active-site residue. Substrate-binding positions include 73–74 (GN), Asn160, Asn193, and 211–212 (ER). Cys220 functions as the Proton acceptor in the catalytic mechanism. 221–222 (GT) lines the substrate pocket.

This sequence belongs to the diaminopimelate epimerase family. In terms of assembly, homodimer.

The protein resides in the cytoplasm. The catalysed reaction is (2S,6S)-2,6-diaminopimelate = meso-2,6-diaminopimelate. It functions in the pathway amino-acid biosynthesis; L-lysine biosynthesis via DAP pathway; DL-2,6-diaminopimelate from LL-2,6-diaminopimelate: step 1/1. Its function is as follows. Catalyzes the stereoinversion of LL-2,6-diaminopimelate (L,L-DAP) to meso-diaminopimelate (meso-DAP), a precursor of L-lysine and an essential component of the bacterial peptidoglycan. In Desulforudis audaxviator (strain MP104C), this protein is Diaminopimelate epimerase.